Reading from the N-terminus, the 504-residue chain is Sphingosine-1-phosphate transporter SPNS2 (504 aa).

The next 11 helical transmembrane spans lie at Leu48 to Met70, Gly94 to Leu114, Ile122 to Thr142, Val182 to Gly202, Trp214 to Val234, Val269 to Ile289, Leu317 to Thr337, Leu351 to Ala371, Ile375 to Ile395, Phe415 to Ile435, and Leu460 to Leu480.

Belongs to the major facilitator superfamily. Spinster (TC 2.A.1.49) family.

It localises to the cell membrane. It is found in the endosome membrane. It catalyses the reaction sphing-4-enine 1-phosphate(in) = sphing-4-enine 1-phosphate(out). The enzyme catalyses sphinganine 1-phosphate(in) = sphinganine 1-phosphate(out). Lipid transporter that specifically mediates export of sphingosine-1-phosphate (sphing-4-enine 1-phosphate, S1P) and sphinganine-1-phosphate, which play critical roles in regulating heart development. Mediates the export of S1P from cells in the extraembryonic yolk syncytial layer (YSL), thereby regulating myocardial precursor migration. The polypeptide is Sphingosine-1-phosphate transporter SPNS2 (Danio rerio (Zebrafish)).